A 359-amino-acid chain; its full sequence is Glycerol-1-phosphate dehydrogenase [NAD(P)+] (359 aa).

NAD(+)-binding positions include 107 to 111 (GRVID) and 129 to 132 (TAAS). Residue aspartate 134 coordinates substrate. Serine 138 lines the NAD(+) pocket. Residue aspartate 181 participates in substrate binding. Positions 181 and 261 each coordinate Zn(2+). A substrate-binding site is contributed by histidine 265. Histidine 277 is a binding site for Zn(2+).

Belongs to the glycerol-1-phosphate dehydrogenase family. It depends on Zn(2+) as a cofactor.

The protein localises to the cytoplasm. It carries out the reaction sn-glycerol 1-phosphate + NAD(+) = dihydroxyacetone phosphate + NADH + H(+). The catalysed reaction is sn-glycerol 1-phosphate + NADP(+) = dihydroxyacetone phosphate + NADPH + H(+). It functions in the pathway membrane lipid metabolism; glycerophospholipid metabolism. Functionally, catalyzes the NAD(P)H-dependent reduction of dihydroxyacetonephosphate (DHAP or glycerone phosphate) to glycerol 1-phosphate (G1P). The G1P thus generated is used as the glycerophosphate backbone of phospholipids in the cellular membranes of Archaea. In Methanoregula boonei (strain DSM 21154 / JCM 14090 / 6A8), this protein is Glycerol-1-phosphate dehydrogenase [NAD(P)+].